The chain runs to 122 residues: Large ribosomal subunit protein uL14 (122 aa).

The protein belongs to the universal ribosomal protein uL14 family. As to quaternary structure, part of the 50S ribosomal subunit. Forms a cluster with proteins L3 and L19. In the 70S ribosome, L14 and L19 interact and together make contacts with the 16S rRNA in bridges B5 and B8.

In terms of biological role, binds to 23S rRNA. Forms part of two intersubunit bridges in the 70S ribosome. The polypeptide is Large ribosomal subunit protein uL14 (Leptothrix cholodnii (strain ATCC 51168 / LMG 8142 / SP-6) (Leptothrix discophora (strain SP-6))).